The chain runs to 122 residues: uncharacterized protein (122 aa).

Over residues 79–90 (NERVTSRVTNSR) the composition is skewed to polar residues. Positions 79-122 (NERVTSRVTNSRTESESNGNGNATGNTSSNANSNGNANGIYIRK) are disordered. The span at 94-122 (ESNGNGNATGNTSSNANSNGNANGIYIRK) shows a compositional bias: low complexity.

This is an uncharacterized protein from Leptolyngbya boryana (Plectonema boryanum).